Consider the following 138-residue polypeptide: Putative ribonuclease VapC45 (138 aa).

Its function is as follows. Toxic component of a type II toxin-antitoxin (TA) system. An RNase. The cognate antitoxin is VapB45. This Mycobacterium tuberculosis (strain ATCC 25618 / H37Rv) protein is Putative ribonuclease VapC45.